Here is a 230-residue protein sequence, read N- to C-terminus: Uracil-DNA glycosylase (230 aa).

Asp-65 acts as the Proton acceptor in catalysis.

It belongs to the uracil-DNA glycosylase (UDG) superfamily. UNG family.

Its subcellular location is the cytoplasm. The enzyme catalyses Hydrolyzes single-stranded DNA or mismatched double-stranded DNA and polynucleotides, releasing free uracil.. Its function is as follows. Excises uracil residues from the DNA which can arise as a result of misincorporation of dUMP residues by DNA polymerase or due to deamination of cytosine. This chain is Uracil-DNA glycosylase, found in Lactiplantibacillus plantarum (strain ATCC BAA-793 / NCIMB 8826 / WCFS1) (Lactobacillus plantarum).